A 244-amino-acid chain; its full sequence is MTVDWWTIGLQVINVSVLIWLLSRFFWRPICAVISRRQQEIAAQLAQVTDGQKQLEADRAAVKEARSSFEQERARIVQQAQQEAQSERQAILAKAQQDAAALEAGAKQSIAQEEAENQARWRSDAAALSCDIAGQLLAQTGCCRPARETLFDRLLKAIATLPDRERLSLRDGFTFATATAPSPDERQAYESALMTAVGEHPVITWAVDPALVEGFAVKTPYLTVASNWQADLVRIREGLSHAGH.

Residues 2–22 traverse the membrane as a helical segment; it reads TVDWWTIGLQVINVSVLIWLL.

Belongs to the ATPase B chain family. F-type ATPases have 2 components, F(1) - the catalytic core - and F(0) - the membrane proton channel. F(1) has five subunits: alpha(3), beta(3), gamma(1), delta(1), epsilon(1). F(0) has three main subunits: a(1), b(2) and c(10-14). The alpha and beta chains form an alternating ring which encloses part of the gamma chain. F(1) is attached to F(0) by a central stalk formed by the gamma and epsilon chains, while a peripheral stalk is formed by the delta and b chains.

The protein localises to the cell inner membrane. In terms of biological role, f(1)F(0) ATP synthase produces ATP from ADP in the presence of a proton or sodium gradient. F-type ATPases consist of two structural domains, F(1) containing the extramembraneous catalytic core and F(0) containing the membrane proton channel, linked together by a central stalk and a peripheral stalk. During catalysis, ATP synthesis in the catalytic domain of F(1) is coupled via a rotary mechanism of the central stalk subunits to proton translocation. Functionally, component of the F(0) channel, it forms part of the peripheral stalk, linking F(1) to F(0). The sequence is that of ATP synthase subunit b 2 from Gluconobacter oxydans (strain 621H) (Gluconobacter suboxydans).